Reading from the N-terminus, the 185-residue chain is DNA replication complex GINS protein PSF2 (185 aa).

The protein belongs to the GINS2/PSF2 family. Component of the GINS complex which is a heterotetramer of gins1/psf1, gins2/psf2, gins3/psf3 and gins4/sld5. Component of the CMG helicase complex, composed of the mcm2-7 complex, the GINS complex and cdc45.

Its subcellular location is the nucleus. The protein localises to the chromosome. In terms of biological role, required for correct functioning of the GINS complex, a complex that plays an essential role in the initiation of DNA replication, and progression of DNA replication forks. GINS complex is a core component of CDC45-MCM-GINS (CMG) helicase, the molecular machine that unwinds template DNA during replication, and around which the replisome is built. The chain is DNA replication complex GINS protein PSF2 (gins2) from Xenopus laevis (African clawed frog).